The primary structure comprises 348 residues: 3-keto-steroid reductase (348 aa).

NADP(+)-binding residues include L18, T41, and R47. Active-site proton donor residues include S180 and Y203. NADP(+) contacts are provided by Y203, K207, and S238. Residue K207 is the Lowers pKa of active site Tyr of the active site.

It belongs to the short-chain dehydrogenases/reductases (SDR) family. ERG27 subfamily.

The enzyme catalyses a 3beta-hydroxysteroid + NADP(+) = a 3-oxosteroid + NADPH + H(+). The protein operates within steroid biosynthesis; zymosterol biosynthesis; zymosterol from lanosterol: step 5/6. Functionally, responsible for the reduction of the keto group on the C-3 of sterols. The protein is 3-keto-steroid reductase (ERG27) of Candida glabrata (strain ATCC 2001 / BCRC 20586 / JCM 3761 / NBRC 0622 / NRRL Y-65 / CBS 138) (Yeast).